The chain runs to 468 residues: RUS family member 1 (468 aa).

The residue at position 2 (A2) is an N-acetylalanine. T49 is modified (phosphothreonine). The chain crosses the membrane as a helical span at residues 247-267 (LLMLPLVSGCPGFSLGCFFFL).

The protein belongs to the RUS1 family.

The protein resides in the membrane. The chain is RUS family member 1 from Homo sapiens (Human).